We begin with the raw amino-acid sequence, 324 residues long: MPGLLRARRTDAVRLDAVTTFHLRHGVEVADALRVGRPVVALESTIVSHGLPRPDNLRVAREIEQTVRDAGAVPATIGMVAGQLVVGLDDAELTRLATVDDVAKLSVRDLAVAAATDADGATTVAATSAVAAAAGIRVFATGGLGGVHREAAQSFDESADLTTLARTPIAVVCAGVKSILDSGATLERLETLGVGVVGYRTRRFPGFYLTDGGFDLDWSVDSPEQVAAALAAQEQHGLHSGGLVVANPLPTDEQLDPALHDRTLAEGLMLLRREGVTGKAVTPFLLAHFHSATEGASLAVNIRIILRNADLAAQIAVASAARQA.

E43 (proton donor) is an active-site residue. Positions 104 and 124 each coordinate substrate. D156 lines the Mn(2+) pocket. 158–160 is a substrate binding site; sequence SAD. The active-site Nucleophile is K177.

It belongs to the pseudouridine-5'-phosphate glycosidase family. Homotrimer. The cofactor is Mn(2+).

It carries out the reaction D-ribose 5-phosphate + uracil = psi-UMP + H2O. Its function is as follows. Catalyzes the reversible cleavage of pseudouridine 5'-phosphate (PsiMP) to ribose 5-phosphate and uracil. Functions biologically in the cleavage direction, as part of a pseudouridine degradation pathway. The sequence is that of Pseudouridine-5'-phosphate glycosidase from Salinispora tropica (strain ATCC BAA-916 / DSM 44818 / JCM 13857 / NBRC 105044 / CNB-440).